The chain runs to 276 residues: Large ribosomal subunit protein uL2 (276 aa).

Residues 223–276 (GVAMNPVDHPHGGGEGRGKGHHPTSPWGLPTKGYKTRRGKRPSDKFIVRRRNEA) form a disordered region. Basic and acidic residues-rich tracts occupy residues 230 to 240 (DHPHGGGEGRG) and 263 to 276 (RPSD…RNEA).

It belongs to the universal ribosomal protein uL2 family. In terms of assembly, part of the 50S ribosomal subunit. Forms a bridge to the 30S subunit in the 70S ribosome.

One of the primary rRNA binding proteins. Required for association of the 30S and 50S subunits to form the 70S ribosome, for tRNA binding and peptide bond formation. It has been suggested to have peptidyltransferase activity; this is somewhat controversial. Makes several contacts with the 16S rRNA in the 70S ribosome. This Thermotoga petrophila (strain ATCC BAA-488 / DSM 13995 / JCM 10881 / RKU-1) protein is Large ribosomal subunit protein uL2.